The chain runs to 154 residues: MRKQIEIFTDGSCLGNPGVGGIGVVLRYKQHEKTLSKGYFQTTNNRMELRAVIEALNLLKEPCEIILHSDSQYMKNGITQWIFNWKKNNWRASTGKPVKNQDLWIALDSAIQPHTIHWRWVKGHSGHRENEMCDELAKQGAENPTLEDTGYRQD.

The RNase H type-1 domain occupies 1–142 (MRKQIEIFTD…CDELAKQGAE (142 aa)). Mg(2+)-binding residues include D10, E48, D70, and D134.

Belongs to the RNase H family. As to quaternary structure, monomer. Mg(2+) is required as a cofactor.

Its subcellular location is the cytoplasm. It carries out the reaction Endonucleolytic cleavage to 5'-phosphomonoester.. In terms of biological role, endonuclease that specifically degrades the RNA of RNA-DNA hybrids. The protein is Ribonuclease H of Actinobacillus succinogenes (strain ATCC 55618 / DSM 22257 / CCUG 43843 / 130Z).